Reading from the N-terminus, the 181-residue chain is UPF0215 protein AF_1433 (181 aa).

It belongs to the UPF0215 family.

The protein is UPF0215 protein AF_1433 of Archaeoglobus fulgidus (strain ATCC 49558 / DSM 4304 / JCM 9628 / NBRC 100126 / VC-16).